The sequence spans 65 residues: Large ribosomal subunit protein uL29 (65 aa).

It belongs to the universal ribosomal protein uL29 family.

The chain is Large ribosomal subunit protein uL29 from Buchnera aphidicola subsp. Acyrthosiphon pisum (strain 5A).